The chain runs to 166 residues: Twist-related protein (166 aa).

Low complexity predominate over residues 1 to 18; that stretch reads MMQEESSSPVSPVDSLSN. The segment at 1 to 83 is disordered; sequence MMQEESSSPV…RVMANVRERQ (83 aa). Over residues 28–39 the composition is skewed to basic residues; that stretch reads SKRGCRKRRSAR. A compositionally biased stretch (polar residues) spans 57 to 75; the sequence is ASSTGSSPQSFEELQSQRV. In terms of domain architecture, bHLH spans 72-123; that stretch reads SQRVMANVRERQRTQSLNEAFSSLRKIIPTLPSDKLSKIQTLKLASRYIDFL.

In terms of assembly, efficient DNA binding requires dimerization with another bHLH protein. Homodimer. As to expression, subset of mesodermal cells.

The protein resides in the nucleus. Probable transcription factor, which may be involved, with other proteins, in establishing the pattern of cell type-specific gene expression in mesodermal cell subgroups. This chain is Twist-related protein (twist1), found in Xenopus laevis (African clawed frog).